The chain runs to 248 residues: Deoxyribose-phosphate aldolase (248 aa).

D106 functions as the Proton donor/acceptor in the catalytic mechanism. K168 functions as the Schiff-base intermediate with acetaldehyde in the catalytic mechanism. Catalysis depends on K197, which acts as the Proton donor/acceptor.

It belongs to the DeoC/FbaB aldolase family. DeoC type 1 subfamily.

It localises to the cytoplasm. It catalyses the reaction 2-deoxy-D-ribose 5-phosphate = D-glyceraldehyde 3-phosphate + acetaldehyde. Its pathway is carbohydrate degradation; 2-deoxy-D-ribose 1-phosphate degradation; D-glyceraldehyde 3-phosphate and acetaldehyde from 2-deoxy-alpha-D-ribose 1-phosphate: step 2/2. In terms of biological role, catalyzes a reversible aldol reaction between acetaldehyde and D-glyceraldehyde 3-phosphate to generate 2-deoxy-D-ribose 5-phosphate. This Rhizobium meliloti (strain 1021) (Ensifer meliloti) protein is Deoxyribose-phosphate aldolase.